The following is a 501-amino-acid chain: Glutathione gamma-glutamylcysteinyltransferase 1 (501 aa).

The Peptidase C83 domain occupies Met1 to Arg221. Catalysis depends on residues Cys56, His162, and Asp180.

It belongs to the phytochelatin synthase family. As to expression, expressed in roots, nodules and leaves.

It carries out the reaction [Glu(-Cys)](n)-Gly + glutathione + H(+) = [Glu(-Cys)](n+1)-Gly + glycine. Its activity is regulated as follows. Requires cadmium for activity. Also activated in vitro by Zn(2+), Cu(2+), Fe(2+) or Fe(3+) ions, but not by Co(2+) or Ni(2+) ions. Involved in the synthesis of phytochelatins (PC) and homophytochelatins (hPC), the heavy-metal-binding peptides of plants. The chain is Glutathione gamma-glutamylcysteinyltransferase 1 (PCS1) from Lotus japonicus (Lotus corniculatus var. japonicus).